The chain runs to 308 residues: Acetaldehyde dehydrogenase (308 aa).

Residue 25–28 (TGAI) participates in NAD(+) binding. Residue Cys139 is the Acyl-thioester intermediate of the active site. Asn279 contacts NAD(+).

This sequence belongs to the acetaldehyde dehydrogenase family.

The enzyme catalyses acetaldehyde + NAD(+) + CoA = acetyl-CoA + NADH + H(+). This is Acetaldehyde dehydrogenase from Streptomyces griseus subsp. griseus (strain JCM 4626 / CBS 651.72 / NBRC 13350 / KCC S-0626 / ISP 5235).